The sequence spans 302 residues: RELT-like protein 2 (302 aa).

The helical transmembrane segment at 15 to 35 (LYMLFLLVLVFFLMGLVGFMI) threads the bilayer. Disordered regions lie at residues 47–68 (RTSR…DDVN), 135–164 (CSRS…TTVF), 177–212 (RYGL…GQPR), and 247–302 (VPCT…AGGM). At Ser-52 the chain carries Phosphoserine. Composition is skewed to basic and acidic residues over residues 148 to 158 (RSKEGKGRPRP) and 177 to 188 (RYGLHEHRDGSP). Residues 277–294 (QEANGQPTKLDTSGQQDS) show a composition bias toward polar residues.

The protein belongs to the RELT family. As to quaternary structure, interacts with RELT, RELL1, OXSR1, PLSCR1 and TRAF2.

It is found in the cell membrane. Its function is as follows. Induces activation of MAPK14/p38 cascade, when overexpressed. Induces apoptosis, when overexpressed. The chain is RELT-like protein 2 (Rell2) from Rattus norvegicus (Rat).